The following is a 265-amino-acid chain: Hydroxyethylthiazole kinase (265 aa).

Residue M36 participates in substrate binding. ATP-binding residues include K112 and S160. G187 serves as a coordination point for substrate.

This sequence belongs to the Thz kinase family. Mg(2+) serves as cofactor.

It catalyses the reaction 5-(2-hydroxyethyl)-4-methylthiazole + ATP = 4-methyl-5-(2-phosphooxyethyl)-thiazole + ADP + H(+). It participates in cofactor biosynthesis; thiamine diphosphate biosynthesis; 4-methyl-5-(2-phosphoethyl)-thiazole from 5-(2-hydroxyethyl)-4-methylthiazole: step 1/1. Its function is as follows. Catalyzes the phosphorylation of the hydroxyl group of 4-methyl-5-beta-hydroxyethylthiazole (THZ). The protein is Hydroxyethylthiazole kinase of Clostridium perfringens (strain 13 / Type A).